The chain runs to 381 residues: Glycerate 2-kinase (381 aa).

This sequence belongs to the glycerate kinase type-1 family.

The catalysed reaction is (R)-glycerate + ATP = (2R)-2-phosphoglycerate + ADP + H(+). Its function is as follows. Catalyzes the transfer of the phosphate group from adenosine triphosphate (ATP) to (R)-glycerate to form (2R)-2-phosphoglycerate, an enzymatic step in (L)-glucarate/galactarate catabolic pathway. This is Glycerate 2-kinase (garK) from Escherichia coli (strain K12).